The chain runs to 112 residues: UPF0329 protein ECU11_0080 (112 aa).

Belongs to the UPF0329 family.

This is UPF0329 protein ECU11_0080 from Encephalitozoon cuniculi (strain GB-M1) (Microsporidian parasite).